Reading from the N-terminus, the 182-residue chain is Ribosome maturation factor RimM (182 aa).

Residues 102–182 form the PRC barrel domain; it reads EEGDYYWKDL…TIEVDWDPGF (81 aa).

The protein belongs to the RimM family. Binds ribosomal protein uS19.

It localises to the cytoplasm. An accessory protein needed during the final step in the assembly of 30S ribosomal subunit, possibly for assembly of the head region. Essential for efficient processing of 16S rRNA. May be needed both before and after RbfA during the maturation of 16S rRNA. It has affinity for free ribosomal 30S subunits but not for 70S ribosomes. This Salmonella gallinarum (strain 287/91 / NCTC 13346) protein is Ribosome maturation factor RimM.